A 363-amino-acid polypeptide reads, in one-letter code: Chorismate synthase (363 aa).

An NADP(+)-binding site is contributed by Arg47. Residues Arg124–Ser126, Gly286, Lys301–Thr305, and Arg327 contribute to the FMN site.

It belongs to the chorismate synthase family. In terms of assembly, homotetramer. It depends on FMNH2 as a cofactor.

The enzyme catalyses 5-O-(1-carboxyvinyl)-3-phosphoshikimate = chorismate + phosphate. It functions in the pathway metabolic intermediate biosynthesis; chorismate biosynthesis; chorismate from D-erythrose 4-phosphate and phosphoenolpyruvate: step 7/7. Its function is as follows. Catalyzes the anti-1,4-elimination of the C-3 phosphate and the C-6 proR hydrogen from 5-enolpyruvylshikimate-3-phosphate (EPSP) to yield chorismate, which is the branch point compound that serves as the starting substrate for the three terminal pathways of aromatic amino acid biosynthesis. This reaction introduces a second double bond into the aromatic ring system. In Prochlorococcus marinus (strain MIT 9211), this protein is Chorismate synthase.